The sequence spans 496 residues: Serine/threonine-protein kinase Sgk3 (496 aa).

The region spanning 12–124 (SCPSVSIPSS…AFLQMDSPRH (113 aa)) is the PX domain. A disordered region spans residues 121–157 (SPRHQSDPSEDEDERSTSKPHSTSRNINLGPTGNPHA). 2 positions are modified to phosphoserine: Ser-126 and Ser-129. Residues 139 to 151 (KPHSTSRNINLGP) show a composition bias toward polar residues. The Protein kinase domain occupies 162–419 (FDFLKVIGKG…FLEIQNHPFF (258 aa)). Residues 168-176 (IGKGSFGKV) and Lys-191 each bind ATP. A Nuclear localization signal motif is present at residues 195 to 205 (KKIVLNRKEQK). Residue Asp-286 is the Proton acceptor of the active site. Residue Thr-320 is modified to Phosphothreonine; by PDPK1. Positions 420 to 496 (ESLSWTDLVQ…YAPPSEDLFL (77 aa)) constitute an AGC-kinase C-terminal domain. A Phosphoserine modification is found at Ser-486.

Belongs to the protein kinase superfamily. AGC Ser/Thr protein kinase family. As to quaternary structure, interacts with GSK3B and FLII. Interacts with PDPK1 in a phosphorylation-dependent manner. Post-translationally, activated by phosphorylation on Ser-486 by an unknown kinase (may be mTORC2 but not confirmed), transforming it into a substrate for PDPK1 which then phosphorylates it on Thr-320. Widely expressed, predominantly in the heart, spleen and 7-day embryo.

Its subcellular location is the cytoplasmic vesicle. It is found in the early endosome. The protein resides in the recycling endosome. It catalyses the reaction L-seryl-[protein] + ATP = O-phospho-L-seryl-[protein] + ADP + H(+). It carries out the reaction L-threonyl-[protein] + ATP = O-phospho-L-threonyl-[protein] + ADP + H(+). Two specific sites, one in the kinase domain (Thr-320) and the other in the C-terminal regulatory region (Ser-486), need to be phosphorylated for its full activation. Serine/threonine-protein kinase which is involved in the regulation of a wide variety of ion channels, membrane transporters, cell growth, proliferation, survival and migration. Up-regulates Na(+) channels: SCNN1A/ENAC and SCN5A, K(+) channels: KCNA3/KV1.3, KCNE1, KCNQ1 and KCNH2/HERG, epithelial Ca(2+) channels: TRPV5 and TRPV6, chloride channel: BSND, creatine transporter: SLC6A8, Na(+)/dicarboxylate cotransporter: SLC13A2/NADC1, Na(+)-dependent phosphate cotransporter: SLC34A2/NAPI-2B, amino acid transporters: SLC1A5/ASCT2 and SLC6A19, glutamate transporters: SLC1A3/EAAT1, SLC1A6/EAAT4 and SLC1A7/EAAT5, glutamate receptors: GRIA1/GLUR1 and GRIK2/GLUR6, Na(+)/H(+) exchanger: SLC9A3/NHE3, and the Na(+)/K(+) ATPase. Plays a role in the regulation of renal tubular phosphate transport and bone density. Phosphorylates NEDD4L and GSK3B. Positively regulates ER transcription activity through phosphorylation of FLII. Negatively regulates the function of ITCH/AIP4 via its phosphorylation and thereby prevents CXCR4 from being efficiently sorted to lysosomes. The protein is Serine/threonine-protein kinase Sgk3 (Sgk3) of Mus musculus (Mouse).